Here is a 496-residue protein sequence, read N- to C-terminus: Transcription termination factor MTERF9, chloroplastic (496 aa).

A chloroplast-targeting transit peptide spans 1–44 (MAGFSLYCFKNPRILFTLPSESPLFVLGSDKCSPATRRPSRKTR). Disordered stretches follow at residues 57–90 (IINPKKKSRYGQTLSPYDSDEDDDDDDDDDDDDW) and 102–155 (YEKK…SWRL). A compositionally biased stretch (acidic residues) spans 74–90 (DSDEDDDDDDDDDDDDW). Basic residues predominate over residues 105–123 (KKPKSHKQTIAKKSVKKGI). The segment covering 146 to 155 (SEKKKESWRL) has biased composition (basic and acidic residues).

This sequence belongs to the mTERF family.

The protein resides in the plastid. The protein localises to the chloroplast. Its function is as follows. Transcription termination factor required for processing and steady-state levels of plastid transcripts. May play a role in response to abiotic stresses. The chain is Transcription termination factor MTERF9, chloroplastic from Arabidopsis thaliana (Mouse-ear cress).